The sequence spans 38 residues: Photosystem I reaction center subunit IX (38 aa).

A helical membrane pass occupies residues 4–24 (FLTTAPVVAAIWFTLTAGILI).

Belongs to the PsaJ family.

It localises to the cellular thylakoid membrane. Its function is as follows. May help in the organization of the PsaE and PsaF subunits. The protein is Photosystem I reaction center subunit IX of Parasynechococcus marenigrum (strain WH8102).